Here is a 473-residue protein sequence, read N- to C-terminus: H(+)/Cl(-) exchange transporter ClcA (473 aa).

Over Met1–Pro32 the chain is Cytoplasmic. Residues Leu33–Val69 form a helical membrane-spanning segment. Residues Gln70 to Ile76 lie on the Periplasmic side of the membrane. A helical membrane pass occupies residues Leu77–Phe100. The Cytoplasmic portion of the chain corresponds to Ala101 to Gly108. Residues Gly106–Pro110 carry the Selectivity filter part_1 motif. Chloride is bound at residue Ser107. An intramembrane region (helical) is located at residues Ile109–Leu116. Residues Glu117–Arg123 lie on the Cytoplasmic side of the membrane. The helical transmembrane segment at Trp124–Ala141 threads the bilayer. At Gly142–Arg147 the chain is on the periplasmic side. The Selectivity filter part_2 motif lies at Gly146–Pro150. A helical membrane pass occupies residues Glu148–Phe166. Topologically, residues Arg167 to Thr176 are cytoplasmic. 2 intramembrane regions (helical) span residues Leu177–Ala189 and Pro193–Ile201. At Glu202–Ser214 the chain is on the cytoplasmic side. Residues Ile215 to Phe232 form a helical membrane-spanning segment. At Asn233–Leu252 the chain is on the periplasmic side. The helical transmembrane segment at Trp253–Gln281 threads the bilayer. Topologically, residues Arg282 to Glu287 are cytoplasmic. The helical transmembrane segment at Ile288–Glu309 threads the bilayer. Residues Pro310–Ser329 are Periplasmic-facing. The chain crosses the membrane as a helical span at residues Val330 to Ser349. Over Ser350–Gly354 the chain is Cytoplasmic. Positions Gly355–Pro359 match the Selectivity filter part_3 motif. A helical transmembrane segment spans residues Gly355–Ala376. Chloride is bound by residues Ile356 and Phe357. Residues Ala377–Ala386 lie on the Periplasmic side of the membrane. Residues Gly387 to Ser401 constitute an intramembrane region (helical). The segment at residues Val402–Ala404 is an intramembrane region (note=Loop between two helices). An intramembrane region (helical) is located at residues Pro405–Thr416. Residues Asp417–Leu421 constitute an intramembrane region (note=Loop between two helices). Residues Ile422–Phe438 traverse the membrane as a helical segment. At Met439–Thr473 the chain is on the cytoplasmic side. Residue Tyr445 participates in chloride binding.

It belongs to the chloride channel (TC 2.A.49) family. ClcA subfamily. Homodimer.

The protein resides in the cell inner membrane. The catalysed reaction is 2 chloride(in) + H(+)(out) = 2 chloride(out) + H(+)(in). In terms of biological role, proton-coupled chloride transporter. Functions as antiport system and exchanges two chloride ions for 1 proton. Probably acts as an electrical shunt for an outwardly-directed proton pump that is linked to amino acid decarboxylation, as part of the extreme acid resistance (XAR) response. This chain is H(+)/Cl(-) exchange transporter ClcA, found in Citrobacter koseri (strain ATCC BAA-895 / CDC 4225-83 / SGSC4696).